A 217-amino-acid polypeptide reads, in one-letter code: Uracil-DNA glycosylase (217 aa).

Asp62 acts as the Proton acceptor in catalysis.

The protein belongs to the uracil-DNA glycosylase (UDG) superfamily. UNG family.

The protein localises to the cytoplasm. The enzyme catalyses Hydrolyzes single-stranded DNA or mismatched double-stranded DNA and polynucleotides, releasing free uracil.. Its function is as follows. Excises uracil residues from the DNA which can arise as a result of misincorporation of dUMP residues by DNA polymerase or due to deamination of cytosine. The protein is Uracil-DNA glycosylase of Streptococcus pneumoniae (strain JJA).